We begin with the raw amino-acid sequence, 151 residues long: Probable cGMP 3',5'-cyclic phosphodiesterase subunit delta (151 aa).

Belongs to the PDE6D/unc-119 family. In terms of assembly, interacts with Pde6.

Its subcellular location is the nucleus. It is found in the cytoplasm. The sequence is that of Probable cGMP 3',5'-cyclic phosphodiesterase subunit delta from Drosophila virilis (Fruit fly).